Reading from the N-terminus, the 70-residue chain is UPF0519 protein D (70 aa).

This sequence belongs to the UPF0519 family.

The chain is UPF0519 protein D from Dictyostelium discoideum (Social amoeba).